Consider the following 463-residue polypeptide: Methionine aminopeptidase 2-2 (463 aa).

The interval 1-97 is disordered; it reads MGSKSPEGHW…TLSVTELKQT (97 aa). Residues 27-36 show a composition bias toward polar residues; it reads DPQTSQNGSG. A compositionally biased stretch (acidic residues) spans 46-57; the sequence is GDDDDDDEDAEE. Positions 69 to 85 are enriched in basic residues; that stretch reads KKKKRKKSNKKKKKKTK. The segment covering 86–97 has biased composition (polar residues); that stretch reads SGTLSVTELKQT. Residue H215 coordinates substrate. The a divalent metal cation site is built by D236, D247, and H316. H324 is a substrate binding site. A divalent metal cation-binding residues include E349 and E444.

The protein belongs to the peptidase M24A family. Methionine aminopeptidase eukaryotic type 2 subfamily. Requires Co(2+) as cofactor. The cofactor is Zn(2+). It depends on Mn(2+) as a cofactor. Fe(2+) serves as cofactor.

It is found in the cytoplasm. The enzyme catalyses Release of N-terminal amino acids, preferentially methionine, from peptides and arylamides.. Cotranslationally removes the N-terminal methionine from nascent proteins. The N-terminal methionine is often cleaved when the second residue in the primary sequence is small and uncharged (Met-Ala-, Cys, Gly, Pro, Ser, Thr, or Val). This is Methionine aminopeptidase 2-2 from Neosartorya fischeri (strain ATCC 1020 / DSM 3700 / CBS 544.65 / FGSC A1164 / JCM 1740 / NRRL 181 / WB 181) (Aspergillus fischerianus).